The primary structure comprises 897 residues: Chromodomain-helicase-DNA-binding protein 1-like (897 aa).

Arginine 9 carries the omega-N-methylarginine modification. The 166-residue stretch at 58–223 (AQRFHCQNGC…YSLLSFVEPD (166 aa)) folds into the Helicase ATP-binding domain. 71-78 (DEMGLGKT) is an ATP binding site. The DEAH box motif lies at 174 to 177 (DEAH). The Helicase C-terminal domain occupies 351 to 513 (LLDKLLAFLY…QKPAADADLQ (163 aa)). Residues serine 540, serine 607, serine 618, serine 628, and serine 636 each carry the phosphoserine modification. The regulatory linker segment (RLS) stretch occupies residues 601–635 (TLLEKASQEGRSLRNKGSVLIPGLVEGSTKRKRVL). The required for ATPase activity stretch occupies residues 615–673 (NKGSVLIPGLVEGSTKRKRVLSPEELEDRQKKRQEAAAKRRRLIEEKKRQKEEAEHKKK). Disordered regions lie at residues 628–654 (STKR…AAKR) and 687–711 (LPSE…DYQD). Residues 638–675 (EELEDRQKKRQEAAAKRRRLIEEKKRQKEEAEHKKKMA) are a coiled coil. The span at 642 to 654 (DRQKKRQEAAAKR) shows a compositional bias: basic and acidic residues. Residues 690–711 (EESEPEDLENGEESSAELDYQD) show a composition bias toward acidic residues. One can recognise a Macro domain in the interval 704–897 (SAELDYQDPD…SSSSSRQLVP (194 aa)). A Phosphoserine modification is found at serine 891.

This sequence belongs to the SNF2/RAD54 helicase family. Interacts with nucleosomes; interacts with the acidic patch of histones. Interacts (via macro domain) with PARP1; interacts only when PARP1 is poly-ADP-ribosylated (PARylated). Interacts with CIAO1. In terms of tissue distribution, frequently overexpressed in hepatomacellular carcinomas.

It localises to the nucleus. Its subcellular location is the chromosome. It carries out the reaction ATP + H2O = ADP + phosphate + H(+). Adopts an inactive conformation in absence of DNA damage. Binding to poly-ADP-ribosylated histones activates the ATP-dependent chromatin remodeler activity. Its function is as follows. ATP-dependent chromatin remodeler that mediates chromatin-remodeling following DNA damage. Recruited to DNA damage sites through interaction with poly-ADP-ribose: specifically recognizes and binds histones that are poly-ADP-ribosylated on serine residues in response to DNA damage. Poly-ADP-ribose-binding activates the ATP-dependent chromatin remodeler activity, thereby regulating chromatin during DNA repair. Catalyzes nucleosome sliding away from DNA breaks in an ATP-dependent manner. Chromatin remodeling activity promotes PARP2 removal from chromatin. The protein is Chromodomain-helicase-DNA-binding protein 1-like of Homo sapiens (Human).